A 91-amino-acid chain; its full sequence is ITCGQVSSNLAPCINYVKGGGAVPPACCNGIRNVNNLARTTADRRAACNCLKQLSGSIPGVNPNNAAALPGKCGVNVPYKISASTNCATVK.

Disulfide bonds link Cys-3-Cys-50, Cys-13-Cys-27, Cys-28-Cys-73, and Cys-48-Cys-87.

The protein belongs to the plant LTP family.

Functionally, plant non-specific lipid-transfer proteins transfer phospholipids as well as galactolipids across membranes. May play a role in wax or cutin deposition in the cell walls of expanding epidermal cells and certain secretory tissues. This is Non-specific lipid-transfer protein 1 from Prunus domestica (Garden plum).